We begin with the raw amino-acid sequence, 1038 residues long: Probable LRR receptor-like serine/threonine-protein kinase At1g53430 (1038 aa).

A signal peptide spans 1–28; sequence MGFIFSTEKVVYVLLLIFVCLENFGSNA. Topologically, residues 29 to 609 are extracellular; that stretch reads QLLPEDEVQT…VDTGKPLSNG (581 aa). N48, N77, N85, N112, and N127 each carry an N-linked (GlcNAc...) asparagine glycan. 6 LRR repeats span residues 113–137, 139–160, 161–184, 185–208, 210–234, and 236–256; these read LTRLREIDLSRNFLNGTIPTTLSQI, LEILSVIGNRLSGPFPPQLGDI, TTLTDVNLETNLFTGPLPRNLGNL, RSLKELLLSANNFTGQIPESLSNL, NLTEFRIDGNSLSGKIPDFIGNWTL, and ERLDLQGTSMEGPIPPSISNL. N196, N210, N231, N255, and N258 each carry an N-linked (GlcNAc...) asparagine glycan. LRR repeat units follow at residues 259–281, 282–305, 306–328, 330–351, and 352–374; these read LTELRITDLRGQAAFSFPDLRNL, MKMKRLVLRNCLIRGPIPEYIGSM, SELKTLDLSSNMLTGVIPDTFRN, DAFNFMFLNNNSLTGPVPQFII, and NSKENLDLSDNNFTQPPTLSCNQ. N339, N363, N471, and N561 each carry an N-linked (GlcNAc...) asparagine glycan. Residues 610–630 traverse the membrane as a helical segment; the sequence is AVAGIVIAACAVFGLLVLVIL. Topologically, residues 631–1038 are cytoplasmic; the sequence is RLTGYLGGKE…LDDLTDVKIE (408 aa). Phosphothreonine is present on T658. Residues 669-950 enclose the Protein kinase domain; the sequence is FDPENKIGEG…EGKIKVQPPL (282 aa). ATP-binding positions include 675–683 and K697; that span reads IGEGGFGPV. A Phosphotyrosine modification is found at Y742. The Proton acceptor role is filled by D795. Position 828 is a phosphoserine (S828). T829 and T834 each carry phosphothreonine. Y842 bears the Phosphotyrosine mark. Residues 984-1038 are disordered; it reads RNREQDISSSSMDGPWVDSSFSEPGKDVSLQQQEEGRSSSSSRKLLDDLTDVKIE. The span at 1027–1038 shows a compositional bias: basic and acidic residues; the sequence is KLLDDLTDVKIE.

This sequence belongs to the protein kinase superfamily. Ser/Thr protein kinase family.

The protein localises to the membrane. The enzyme catalyses L-seryl-[protein] + ATP = O-phospho-L-seryl-[protein] + ADP + H(+). It carries out the reaction L-threonyl-[protein] + ATP = O-phospho-L-threonyl-[protein] + ADP + H(+). This is Probable LRR receptor-like serine/threonine-protein kinase At1g53430 from Arabidopsis thaliana (Mouse-ear cress).